The sequence spans 246 residues: Envelope glycoprotein L (246 aa).

The first 19 residues, 1–19 (MKTNIFFIFLISILNQIYA), serve as a signal peptide directing secretion. The gL betaherpesvirus-type domain occupies 29-235 (LEQECIKNIL…EKYNEVLPFR (207 aa)). Cys-134 and Cys-139 are disulfide-bonded.

This sequence belongs to the herpesviridae glycoprotein L (gL) family. Betaherpesvirinae gL subfamily. Interacts with glycoprotein H (gH); this interaction is necessary for the correct processing and cell surface expression of gH.

The protein resides in the virion membrane. It localises to the host cell membrane. The protein localises to the host Golgi apparatus. Its subcellular location is the host trans-Golgi network. Functionally, the heterodimer glycoprotein H-glycoprotein L is required for the fusion of viral and plasma membranes leading to virus entry into the host cell. Acts as a functional inhibitor of gH and maintains gH in an inhibited form. Upon binding to host integrins, gL dissociates from gH leading to activation of the viral fusion glycoproteins gB and gH. The polypeptide is Envelope glycoprotein L (Homo sapiens (Human)).